A 484-amino-acid chain; its full sequence is Aspartyl aminopeptidase (484 aa).

N-acetylmethionine is present on Met1. His84 contacts Zn(2+). His159 contacts substrate. A compositionally biased stretch (low complexity) spans 188–206 (PVESKSTTTTTTTESPKTS). The segment at 188–213 (PVESKSTTTTTTTESPKTSDPQDVNS) is disordered. Asp266 provides a ligand contact to Zn(2+). Substrate is bound at residue Glu301. Glu302 and Asp354 together coordinate Zn(2+). Residues Asp354, His357, Lys382, and Tyr389 each coordinate substrate. His448 serves as a coordination point for Zn(2+).

The protein belongs to the peptidase M18 family. As to quaternary structure, tetrahedron-shaped homododecamer built from six homodimers. The cofactor is Zn(2+).

It is found in the cytoplasm. It catalyses the reaction Release of an N-terminal aspartate or glutamate from a peptide, with a preference for aspartate.. Its function is as follows. Likely to play an important role in intracellular protein and peptide metabolism. This is Aspartyl aminopeptidase (dnpep) from Dictyostelium discoideum (Social amoeba).